The following is a 254-amino-acid chain: Agamous-like MADS-box protein AGL9 homolog (254 aa).

Positions 3-57 (RGRVELKRIENKINRQVTFAKRRNGLLKKAYELSVLCDAEVALIIFSNRGKLYEF) constitute an MADS-box domain. The region spanning 91 to 181 (ELSSQQEYLK…RLRLADGYQM (91 aa)) is the K-box domain.

It localises to the nucleus. Its function is as follows. Probable transcription factor active in inflorescence development and floral organogenesis. This Sinapis alba (White mustard) protein is Agamous-like MADS-box protein AGL9 homolog (AGL9).